A 110-amino-acid polypeptide reads, in one-letter code: Large ribosomal subunit protein uL22 (110 aa).

Belongs to the universal ribosomal protein uL22 family. Part of the 50S ribosomal subunit.

In terms of biological role, this protein binds specifically to 23S rRNA; its binding is stimulated by other ribosomal proteins, e.g. L4, L17, and L20. It is important during the early stages of 50S assembly. It makes multiple contacts with different domains of the 23S rRNA in the assembled 50S subunit and ribosome. The globular domain of the protein is located near the polypeptide exit tunnel on the outside of the subunit, while an extended beta-hairpin is found that lines the wall of the exit tunnel in the center of the 70S ribosome. This is Large ribosomal subunit protein uL22 from Solidesulfovibrio magneticus (strain ATCC 700980 / DSM 13731 / RS-1) (Desulfovibrio magneticus).